The sequence spans 316 residues: Cuticle collagen 13 (316 aa).

The signal sequence occupies residues 1–36 (MSEDLKQIAQETESLRKVAFFGIAVSTIATLTAIIA). Low complexity-rich tracts occupy residues 127–157 (SGAA…PGQD) and 183–204 (APGQ…GAAL). Residues 127–316 (SGAAGPAGSP…CPPPRTAPGY (190 aa)) are disordered. 5 triple-helical region regions span residues 128-157 (GAAG…PGQD), 176-202 (GPPG…SGGA), 206-235 (GPPG…PGQV), 240-266 (GTPG…AGSS), and 269-304 (GGPG…EGAC). Over residues 205–217 (PGPPGPAGPPGPA) the composition is skewed to pro residues. Low complexity predominate over residues 219–234 (QPGSNGNAGAPGAPGQ). Over residues 241 to 251 (TPGPAGPPGSP) the composition is skewed to pro residues. 2 stretches are compositionally biased toward low complexity: residues 256–266 (APGQPGQAGSS) and 276–295 (DAGA…PGQD). Residues 307–316 (CPPPRTAPGY) show a composition bias toward pro residues.

It belongs to the cuticular collagen family. Collagen polypeptide chains are complexed within the cuticle by disulfide bonds and other types of covalent cross-links.

In terms of biological role, nematode cuticles are composed largely of collagen-like proteins. The cuticle functions both as an exoskeleton and as a barrier to protect the worm from its environment. This chain is Cuticle collagen 13 (col-13), found in Caenorhabditis elegans.